The primary structure comprises 380 residues: Queuine tRNA-ribosyltransferase (380 aa).

Aspartate 95 functions as the Proton acceptor in the catalytic mechanism. Substrate contacts are provided by residues 95–99, aspartate 149, glutamine 192, and glycine 219; that span reads DSGGF. Residues 250-256 form an RNA binding region; it reads GVGSPDA. Aspartate 269 (nucleophile) is an active-site residue. An RNA binding; important for wobble base 34 recognition region spans residues 274 to 278; that stretch reads TRIAR. Zn(2+) is bound by residues cysteine 307, cysteine 309, cysteine 312, and histidine 338.

Belongs to the queuine tRNA-ribosyltransferase family. Homodimer. Within each dimer, one monomer is responsible for RNA recognition and catalysis, while the other monomer binds to the replacement base PreQ1. It depends on Zn(2+) as a cofactor.

It carries out the reaction 7-aminomethyl-7-carbaguanine + guanosine(34) in tRNA = 7-aminomethyl-7-carbaguanosine(34) in tRNA + guanine. The protein operates within tRNA modification; tRNA-queuosine biosynthesis. In terms of biological role, catalyzes the base-exchange of a guanine (G) residue with the queuine precursor 7-aminomethyl-7-deazaguanine (PreQ1) at position 34 (anticodon wobble position) in tRNAs with GU(N) anticodons (tRNA-Asp, -Asn, -His and -Tyr). Catalysis occurs through a double-displacement mechanism. The nucleophile active site attacks the C1' of nucleotide 34 to detach the guanine base from the RNA, forming a covalent enzyme-RNA intermediate. The proton acceptor active site deprotonates the incoming PreQ1, allowing a nucleophilic attack on the C1' of the ribose to form the product. After dissociation, two additional enzymatic reactions on the tRNA convert PreQ1 to queuine (Q), resulting in the hypermodified nucleoside queuosine (7-(((4,5-cis-dihydroxy-2-cyclopenten-1-yl)amino)methyl)-7-deazaguanosine). The sequence is that of Queuine tRNA-ribosyltransferase from Pediococcus pentosaceus (strain ATCC 25745 / CCUG 21536 / LMG 10740 / 183-1w).